Reading from the N-terminus, the 81-residue chain is Small ribosomal subunit protein bS16 (81 aa).

This sequence belongs to the bacterial ribosomal protein bS16 family.

In Clostridium acetobutylicum (strain ATCC 824 / DSM 792 / JCM 1419 / IAM 19013 / LMG 5710 / NBRC 13948 / NRRL B-527 / VKM B-1787 / 2291 / W), this protein is Small ribosomal subunit protein bS16.